The following is a 247-amino-acid chain: VQ motif-containing protein 4 (247 aa).

The interval 1 to 128 (MENSPRYREA…SSSSASGFRL (128 aa)) is disordered. The residue at position 16 (Ser16) is a Phosphoserine. Positions 21 to 37 (NSNNSCGMSSSSESNKP) are enriched in low complexity. Polar residues-rich tracts occupy residues 48-75 (RSES…QMLT) and 87-106 (LKPN…SSFS). The VQ motif lies at 67-76 (FKQVVQMLTG). Phosphoserine occurs at positions 106, 155, 163, 165, and 175. Thr178 is modified (phosphothreonine). The segment at 184–247 (PFDRSGSSNQ…VSGSSSASTS (64 aa)) is disordered. Ser194 carries the phosphoserine modification. A compositionally biased stretch (basic and acidic residues) spans 200–210 (AEEKAMKERGF). Ser215 is subject to Phosphoserine. Thr219 and Thr234 each carry phosphothreonine. Residues Ser235, Ser239, and Ser243 each carry the phosphoserine modification. Polar residues predominate over residues 236–247 (PRVSGSSSASTS).

Interacts with MPK3 and MPK6. Post-translationally, phosphorylated on serine and threonine residues by MPK6 following treatment with the pathogen-associated molecular pattern (PAMP) flg22. MAP kinase-mediated phosphorylation after PAMP elicitation causes degradation of VQ4, allowing WRKY33 to promote transcription from defense genes.

It localises to the nucleus. Functionally, acts as a negative regulator of WRKY33 transcription factor activity in the promotion of defense gene expression. Acts as a negative regulator of pathogen-associated molecular pattern (PAMP)-induced responses to modulate resistance to pathogens. The sequence is that of VQ motif-containing protein 4 from Arabidopsis thaliana (Mouse-ear cress).